Consider the following 121-residue polypeptide: Basic phospholipase A2 caudoxin (121 aa).

Disulfide bonds link Cys25–Cys114, Cys27–Cys43, Cys42–Cys94, Cys48–Cys121, Cys49–Cys87, Cys56–Cys80, and Cys74–Cys85. Ca(2+) is bound by residues Tyr26, Gly28, and Gly30. His46 is an active-site residue. Asp47 is a binding site for Ca(2+). Asp88 is a catalytic residue.

This sequence belongs to the phospholipase A2 family. Group II subfamily. D49 sub-subfamily. Monomer. The cofactor is Ca(2+). As to expression, expressed by the venom gland.

The protein localises to the secreted. It carries out the reaction a 1,2-diacyl-sn-glycero-3-phosphocholine + H2O = a 1-acyl-sn-glycero-3-phosphocholine + a fatty acid + H(+). Snake venom phospholipase A2 (PLA2) that shows anticoagulant activity and presynaptic neurotoxicity. Acts as an anticoagulant toxin by inhibiting prothrombinase complex formation. Shows about 50% of the prothrombinase complex inhibition compared to CM-IV of N.nigricollis venom. Acts as a neurotoxin by inhibiting neuromuscular transmission by blocking acetylcholine release from the nerve termini. PLA2 catalyzes the calcium-dependent hydrolysis of the 2-acyl groups in 3-sn-phosphoglycerides. This Bitis caudalis (Horned adder) protein is Basic phospholipase A2 caudoxin.